A 376-amino-acid polypeptide reads, in one-letter code: Erythronate-4-phosphate dehydrogenase (376 aa).

Residues Ser-45 and Thr-67 each coordinate substrate. Residues 127 to 128 (QV), Asp-147, and Thr-176 contribute to the NAD(+) site. Residue Arg-209 is part of the active site. Asp-233 is an NAD(+) binding site. Glu-238 is a catalytic residue. His-255 acts as the Proton donor in catalysis. Gly-258 contributes to the NAD(+) binding site. Substrate is bound at residue Tyr-259.

The protein belongs to the D-isomer specific 2-hydroxyacid dehydrogenase family. PdxB subfamily. Homodimer.

The protein resides in the cytoplasm. It catalyses the reaction 4-phospho-D-erythronate + NAD(+) = (R)-3-hydroxy-2-oxo-4-phosphooxybutanoate + NADH + H(+). It participates in cofactor biosynthesis; pyridoxine 5'-phosphate biosynthesis; pyridoxine 5'-phosphate from D-erythrose 4-phosphate: step 2/5. Its function is as follows. Catalyzes the oxidation of erythronate-4-phosphate to 3-hydroxy-2-oxo-4-phosphonooxybutanoate. This Aliivibrio salmonicida (strain LFI1238) (Vibrio salmonicida (strain LFI1238)) protein is Erythronate-4-phosphate dehydrogenase.